Reading from the N-terminus, the 163-residue chain is Protein FAM167B (163 aa).

Positions 73 to 132 (FDSMDSALEWLRRELREMQAQDRQLAGQLLRLRAQLHRLKMDQACHLHQELLDEAELELE) form a coiled coil.

This sequence belongs to the FAM167 (SEC) family.

This chain is Protein FAM167B (FAM167B), found in Homo sapiens (Human).